The primary structure comprises 70 residues: UPF0150 protein TM_1311 (70 aa).

Belongs to the UPF0150 family.

The polypeptide is UPF0150 protein TM_1311 (Thermotoga maritima (strain ATCC 43589 / DSM 3109 / JCM 10099 / NBRC 100826 / MSB8)).